Consider the following 136-residue polypeptide: Galectin-7 (136 aa).

In terms of domain architecture, Galectin spans 6–136 (HKTSLPQGVR…DVQLHSLNIF (131 aa)). 70-76 (WGREERG) lines the a beta-D-galactoside pocket.

Monomer.

The protein resides in the cytoplasm. It localises to the nucleus. Its subcellular location is the secreted. In terms of biological role, could be involved in cell-cell and/or cell-matrix interactions necessary for normal growth control. Pro-apoptotic protein that functions intracellularly upstream of JNK activation and cytochrome c release. The sequence is that of Galectin-7 (Lgals7) from Mus musculus (Mouse).